Consider the following 177-residue polypeptide: Glutathione peroxidase homolog (177 aa).

Residue cysteine 35 is part of the active site.

The protein belongs to the glutathione peroxidase family.

In terms of biological role, important in the cellular metabolism or defense processes particular to this pathogen. The sequence is that of Glutathione peroxidase homolog (gpxA) from Neisseria meningitidis serogroup A / serotype 4A (strain DSM 15465 / Z2491).